The primary structure comprises 789 residues: MTKDKEPIVKNFHLVCIVTLIVGTIIQFSDADEFAIDMSKTGLTHVPKDLPPKTKVLDMSQNYLSELQISDISFLSGLKILVLSHNRLQLLDLSVFKFNQDLEYLDLSHNQLKKMSCHPFVNLKHLDLSFNDFDSLPICKEFGNLTQLDFLGLSATKLQQLDLLPIAHLHLNCILLDLKGYYVKQNETESLQILNTKKLHLVFHTGSFFSVQVNMSVNTLGCLEMTNIKLNDKNCYFLMKFLLELTKGPSLLNFTLNHMETTWKCLVRVFQFLWTKPVEYLNIYNLTIVDDINKEYFIYCKTALKALKIEHITKTVFIFSWSSLYTLFSEMNIMMLSITDTPFIHMLCPKTRSTFKFLDFTQNVFTDSIFENCSTLVELETLILQKNGLKDLFKIGLMTKGMPSLEILDLSWNSLVFNRQRKCIWVGSILMLNMSSNLLTDLVFRCLPPRVTVLDLHNNRIMSIPKDVTSLETLQELNIAFNSLTDLPGCGTFSSLSVLIIDYNLISHPSTDFIQSCQNITSIKAGKNPFQCTCDLREFIKTISQMSSEVVKDWPDSYKCDYPESYKGTLLQDFHISQLSCSTSLLTVTIGATMLVLVVTVTFLCIYLDLPWYIRMVYQWTQTRRRARNIPLEELQRTLQFHAFISYSGHDSAWVKTELLPNLEKEDIQICLHERNFVPGKSIIENIINFIEKSYKSIFVLSPNFVQSEWCHYELYFAHHNLFHEAFDNLILILLEPIPQYSIPNNYHKLKSLIAQRTYLEWPKEKSKHGLFWANLRAAINIKLMEEKK.

The N-terminal stretch at 1–31 is a signal peptide; that stretch reads MTKDKEPIVKNFHLVCIVTLIVGTIIQFSDA. Topologically, residues 32–587 are extracellular; it reads DEFAIDMSKT…QLSCSTSLLT (556 aa). LRR repeat units follow at residues 54-77, 78-101, 102-122, 123-147, 148-168, 169-196, 197-219, 220-250, 251-277, 278-303, 304-330, 331-354, 355-378, 379-404, 405-428, 429-449, 450-473, 474-495, and 496-519; these read TKVL…FLSG, LKIL…FNQD, LEYL…PFVN, LKHL…NLTQ, LDFL…PIAH, LHLN…ILNT, KKLH…SVNT, LGCL…KGPS, LLNF…WTKP, VEYL…CKTA, LKAL…LFSE, MNIM…TRST, FKFL…TLVE, LETL…GMPS, LEIL…WVGS, ILML…CLPP, RVTV…SLET, LQEL…TFSS, and LSVL…SCQN. A disulfide bridge connects residues Cys117 and Cys139. N-linked (GlcNAc...) asparagine glycosylation is present at Asn144. N-linked (GlcNAc...) asparagine glycosylation is found at Asn186 and Asn214. The cysteines at positions 235 and 265 are disulfide-linked. N-linked (GlcNAc...) asparagine glycans are attached at residues Asn253 and Asn285. Cys348 and Cys373 are joined by a disulfide. The N-linked (GlcNAc...) asparagine glycan is linked to Asn372. Residues Cys423 and Cys446 are joined by a disulfide bond. Asn433 carries N-linked (GlcNAc...) asparagine glycosylation. N-linked (GlcNAc...) asparagine glycosylation is present at Asn519. One can recognise an LRRCT domain in the interval 520–575; that stretch reads ITSIKAGKNPFQCTCDLREFIKTISQMSSEVVKDWPDSYKCDYPESYKGTLLQDFH. Residues 588–608 form a helical membrane-spanning segment; the sequence is VTIGATMLVLVVTVTFLCIYL. Residues 609 to 789 lie on the Cytoplasmic side of the membrane; the sequence is DLPWYIRMVY…INIKLMEEKK (181 aa). Residues 639–780 form the TIR domain; that stretch reads LQFHAFISYS…LFWANLRAAI (142 aa).

The protein belongs to the Toll-like receptor family. Homodimer (via cytoplasmic TIR domain). Heterodimer with TLR2 via their respective extracellular domains. Binds MYD88 via their respective TIR domains. Interacts with CD36, following CD36 stimulation by oxLDL or amyloid-beta 42, and forms a heterodimer with TLR4. The trimeric complex is internalized and triggers inflammatory response. LYN kinase activity facilitates TLR4:TLR6 heterodimerization and signal initiation. The heterodimer TLR2:TLR6 interacts with CD14 and CD36 in response to triacylated lipopeptides.

The protein resides in the cell membrane. Its subcellular location is the cytoplasmic vesicle. It is found in the phagosome membrane. It localises to the membrane raft. The protein localises to the golgi apparatus. In terms of biological role, participates in the innate immune response to Gram-positive bacteria and fungi. Specifically recognizes diacylated and, to a lesser extent, triacylated lipopeptides. In response to diacylated lipopeptides, forms the activation cluster TLR2:TLR6:CD14:CD36, this cluster triggers signaling from the cell surface and subsequently is targeted to the Golgi in a lipid-raft dependent pathway. Acts via MYD88 and TRAF6, leading to NF-kappa-B activation, cytokine secretion and the inflammatory response. Recognizes mycoplasmal macrophage-activating lipopeptide-2kD (MALP-2), soluble tuberculosis factor (STF), phenol-soluble modulin (PSM) and B.burgdorferi outer surface protein A lipoprotein (OspA-L) cooperatively with TLR2. In complex with TLR4, promotes sterile inflammation in monocytes/macrophages in response to oxidized low-density lipoprotein (oxLDL) or amyloid-beta 42. In this context, the initial signal is provided by oxLDL- or amyloid-beta 42-binding to CD36. This event induces the formation of a heterodimer of TLR4 and TLR6, which is rapidly internalized and triggers inflammatory response, leading to the NF-kappa-B-dependent production of CXCL1, CXCL2 and CCL9 cytokines, via MYD88 signaling pathway, and CCL5 cytokine, via TICAM1 signaling pathway, as well as IL1B secretion. This Dasypus novemcinctus (Nine-banded armadillo) protein is Toll-like receptor 6 (TLR6).